The following is a 65-amino-acid chain: Alpha-conotoxin Mr1.1 (65 aa).

The first 21 residues, 1-21 (MGMRMMFTVFLLVVLATTVVS), serve as a signal peptide directing secretion. The propeptide occupies 22 to 48 (FTSDRASDGRKAAAKDKASDLVALTVK). Intrachain disulfides connect C50-C56 and C51-C64. The tract at residues 52–54 (SHP) is ser-Xaa-Pro motif, crucial for potent interaction with nAChR. Residue C64 is modified to Cysteine amide.

The protein belongs to the conotoxin A superfamily. In terms of tissue distribution, expressed by the venom duct.

The protein resides in the secreted. Alpha-conotoxins act on postsynaptic membranes, they bind to the nicotinic acetylcholine receptors (nAChR) and thus inhibit them. This toxin potently and reversibly inhibits alpha-9-alpha-10/CHRNA9-CHRNA10 (IC(50)=92 nM (human) and IC(50)=8.3 nM (rat)) and human alpha3-beta-2/CHRNA3-CHRNB2 nAChR (IC(50)=218.9 nM). Also moderately inhibits human alpha-3-beta-4/CHRNA3-CHRNB4 (60% inhibition at 1 uM), rat alpha-7/CHRNA7 (65% inhibition at 1 uM) and rat alpha-3-beta-2/CHRNA3-CHRNB2 nAChR (50-70% inhibition at 10 uM). In two rat pain models, this toxin shows analgesic effect. The chain is Alpha-conotoxin Mr1.1 from Conus marmoreus (Marble cone).